Consider the following 332-residue polypeptide: Ribose-phosphate pyrophosphokinase (332 aa).

Residues 43-45 (DGE) and 102-103 (RQ) each bind ATP. Mg(2+) contacts are provided by H136 and D176. K199 is a catalytic residue. D-ribose 5-phosphate contacts are provided by residues R201, D225, and 229–233 (DTGGT).

This sequence belongs to the ribose-phosphate pyrophosphokinase family. Class I subfamily. As to quaternary structure, homohexamer. Requires Mg(2+) as cofactor.

It localises to the cytoplasm. It catalyses the reaction D-ribose 5-phosphate + ATP = 5-phospho-alpha-D-ribose 1-diphosphate + AMP + H(+). It functions in the pathway metabolic intermediate biosynthesis; 5-phospho-alpha-D-ribose 1-diphosphate biosynthesis; 5-phospho-alpha-D-ribose 1-diphosphate from D-ribose 5-phosphate (route I): step 1/1. Involved in the biosynthesis of the central metabolite phospho-alpha-D-ribosyl-1-pyrophosphate (PRPP) via the transfer of pyrophosphoryl group from ATP to 1-hydroxyl of ribose-5-phosphate (Rib-5-P). The polypeptide is Ribose-phosphate pyrophosphokinase (Mycoplasma genitalium (strain ATCC 33530 / DSM 19775 / NCTC 10195 / G37) (Mycoplasmoides genitalium)).